A 336-amino-acid polypeptide reads, in one-letter code: Fructose-1,6-bisphosphatase class 1 (336 aa).

Mg(2+)-binding residues include E90, D112, L114, and D115. Residues D115 to S118, N211, and K277 contribute to the substrate site. Position 283 (E283) interacts with Mg(2+).

This sequence belongs to the FBPase class 1 family. As to quaternary structure, homotetramer. The cofactor is Mg(2+).

It is found in the cytoplasm. It catalyses the reaction beta-D-fructose 1,6-bisphosphate + H2O = beta-D-fructose 6-phosphate + phosphate. The protein operates within carbohydrate biosynthesis; gluconeogenesis. This Pseudomonas fluorescens (strain Pf0-1) protein is Fructose-1,6-bisphosphatase class 1.